A 242-amino-acid chain; its full sequence is GLIPR1-like protein 1 (242 aa).

The signal sequence occupies residues 1 to 22; the sequence is MALKNKFSCLWILGLCLVATTS. One can recognise an SCP domain in the interval 39–171; sequence EAHNEWRGKV…ASTAIFVCNY (133 aa). An N-linked (GlcNAc...) asparagine glycan is attached at N119. G221 carries GPI-anchor amidated glycine lipidation. A propeptide spans 222–242 (removed in mature form); that stretch reads RAPQQTAFNPFSLGFLLLRIF.

It belongs to the CRISP family. In terms of assembly, part of a oolemmal binding multimeric complex (IZUMO1 complex) composed at least of IZUMO1 and GLIPR1L1; the complex assemblage is influenced by the maturation status of the male germ cell. Interacts with IZUMO1. Post-translationally, N-glycosylated. N-glycosylation decreases during the transit in the caput. Highly expressed in testis.

It localises to the cytoplasmic vesicle. The protein localises to the secretory vesicle. The protein resides in the acrosome. Its subcellular location is the cell membrane. It is found in the membrane raft. It localises to the secreted. Required for optimal fertilization at the stage of sperm-oocyte fusion, plays a role in optimizing acrosome function, the translocation of IZUMO1 during the acrosome reaction and the fertilization process. Component of epididymosomes, one type of membranous microvesicules which mediate the transfer of lipids and proteins to spermatozoa plasma membrane during epididymal maturation. Also component of the CD9-positive microvesicules found in the cauda region. The protein is GLIPR1-like protein 1 (GLIPR1L1) of Homo sapiens (Human).